A 318-amino-acid polypeptide reads, in one-letter code: Ankyrin repeat and SOCS box protein 7 (318 aa).

ANK repeat units follow at residues 13–42, 46–75, 80–109, 116–145, 149–178, 180–208, and 213–242; these read QEEL…SPNG, NGWT…DPTV, GGFT…RSDI, DGWT…EVDP, KGTT…NIDI, NGFL…DTDL, and DGQT…DTNT. Residues 265-318 form the SOCS box domain; sequence LDFLQEVTRQPRNLQDLCRIKIRQCIGLQNLKLLDELPIAKVMKDYLKHKFDDI.

It belongs to the ankyrin SOCS box (ASB) family. Interacts with CUL5. Interacts with RNF7. Interacts with PSRC1.

It participates in protein modification; protein ubiquitination. Probable substrate-recognition component of a SCF-like ECS (Elongin-Cullin-SOCS-box protein) E3 ubiquitin-protein ligase complex which mediates the ubiquitination and subsequent proteasomal degradation of target proteins. Plays a role in spindle dynamics and genome integrity by targeting the mitotic progression protein PSRC1 for proteasomal degradation in a cell cycle-dependent manner. Also participates in meiosis by mediating the proper attachment between kinetochores and microtubules. This Macaca fascicularis (Crab-eating macaque) protein is Ankyrin repeat and SOCS box protein 7 (ASB7).